Here is a 304-residue protein sequence, read N- to C-terminus: Ribonuclease Z (304 aa).

Positions 63, 65, 67, 68, 143, 213, and 271 each coordinate Zn(2+). D67 serves as the catalytic Proton acceptor.

The protein belongs to the RNase Z family. Homodimer. The cofactor is Zn(2+).

The enzyme catalyses Endonucleolytic cleavage of RNA, removing extra 3' nucleotides from tRNA precursor, generating 3' termini of tRNAs. A 3'-hydroxy group is left at the tRNA terminus and a 5'-phosphoryl group is left at the trailer molecule.. In terms of biological role, zinc phosphodiesterase, which displays some tRNA 3'-processing endonuclease activity. Probably involved in tRNA maturation, by removing a 3'-trailer from precursor tRNA. The sequence is that of Ribonuclease Z from Bacteroides fragilis (strain YCH46).